A 186-amino-acid chain; its full sequence is ATP synthase subunit b 3 (186 aa).

Residues 5–25 (LLPALLTFSATPALAAKGPFF) form a helical membrane-spanning segment.

The protein belongs to the ATPase B chain family. F-type ATPases have 2 components, F(1) - the catalytic core - and F(0) - the membrane proton channel. F(1) has five subunits: alpha(3), beta(3), gamma(1), delta(1), epsilon(1). F(0) has three main subunits: a(1), b(2) and c(10-14). The alpha and beta chains form an alternating ring which encloses part of the gamma chain. F(1) is attached to F(0) by a central stalk formed by the gamma and epsilon chains, while a peripheral stalk is formed by the delta and b chains.

It localises to the cell inner membrane. Its function is as follows. F(1)F(0) ATP synthase produces ATP from ADP in the presence of a proton or sodium gradient. F-type ATPases consist of two structural domains, F(1) containing the extramembraneous catalytic core and F(0) containing the membrane proton channel, linked together by a central stalk and a peripheral stalk. During catalysis, ATP synthesis in the catalytic domain of F(1) is coupled via a rotary mechanism of the central stalk subunits to proton translocation. Component of the F(0) channel, it forms part of the peripheral stalk, linking F(1) to F(0). The sequence is that of ATP synthase subunit b 3 from Dinoroseobacter shibae (strain DSM 16493 / NCIMB 14021 / DFL 12).